A 71-amino-acid chain; its full sequence is Long neurotoxin 5 (71 aa).

5 disulfides stabilise this stretch: C3/C20, C14/C41, C26/C30, C45/C56, and C57/C62.

This sequence belongs to the three-finger toxin family. Long-chain subfamily. Type II alpha-neurotoxin sub-subfamily. Expressed by the venom gland.

The protein localises to the secreted. Binds with high affinity to muscular (alpha-1/CHRNA1) and neuronal (alpha-7/CHRNA7) nicotinic acetylcholine receptor (nAChR) and inhibits acetylcholine from binding to the receptor, thereby impairing neuromuscular and neuronal transmission. This is Long neurotoxin 5 from Naja naja (Indian cobra).